The primary structure comprises 235 residues: Large ribosomal subunit protein uL1 (235 aa).

This sequence belongs to the universal ribosomal protein uL1 family. Part of the 50S ribosomal subunit.

Its function is as follows. Binds directly to 23S rRNA. The L1 stalk is quite mobile in the ribosome, and is involved in E site tRNA release. Protein L1 is also a translational repressor protein, it controls the translation of the L11 operon by binding to its mRNA. This Methylobacterium sp. (strain 4-46) protein is Large ribosomal subunit protein uL1.